Here is a 367-residue protein sequence, read N- to C-terminus: Putative ionic transporter y4hA (367 aa).

Transmembrane regions (helical) follow at residues 12 to 32 (VPLW…MTLA), 39 to 59 (SVVL…ASVH), 74 to 94 (AILL…SLML), 108 to 128 (VFAA…VLGG), 143 to 163 (AALA…NFVT), 172 to 192 (AIQL…FLFV), 221 to 241 (LAAG…AMLL), 249 to 269 (VEAL…VVLL), 291 to 311 (VLGS…AISV), 318 to 338 (ALGL…VGTI), and 347 to 367 (VLQG…SAIP).

The protein belongs to the Ca(2+):cation antiporter (CaCA) (TC 2.A.19) family.

The protein localises to the cell membrane. Its function is as follows. Possible cation transporter. The protein is Putative ionic transporter y4hA of Sinorhizobium fredii (strain NBRC 101917 / NGR234).